Consider the following 123-residue polypeptide: Small ribosomal subunit protein uS12cz/uS12cy (123 aa).

It belongs to the universal ribosomal protein uS12 family. In terms of assembly, part of the 30S ribosomal subunit.

The protein localises to the plastid. It localises to the chloroplast. Functionally, with S4 and S5 plays an important role in translational accuracy. Located at the interface of the 30S and 50S subunits. This chain is Small ribosomal subunit protein uS12cz/uS12cy (rps12-A), found in Atropa belladonna (Belladonna).